Consider the following 132-residue polypeptide: Small ribosomal subunit protein uS8 (132 aa).

This sequence belongs to the universal ribosomal protein uS8 family. As to quaternary structure, part of the 30S ribosomal subunit. Contacts proteins S5 and S12.

Its function is as follows. One of the primary rRNA binding proteins, it binds directly to 16S rRNA central domain where it helps coordinate assembly of the platform of the 30S subunit. The protein is Small ribosomal subunit protein uS8 of Brucella ovis (strain ATCC 25840 / 63/290 / NCTC 10512).